Consider the following 86-residue polypeptide: U15-lycotoxin-Ls1d (86 aa).

Positions 1–20 (MNSKIFAVLLLLALLSCVLS) are cleaved as a signal peptide. Residues 21 to 66 (DQYCPKSSITACKKMNIRNDCCKDDDCTGGSWCCATPCGNFCKYPT) form the WAP domain. 5 disulfides stabilise this stretch: Cys24–Cys54, Cys32–Cys58, Cys41–Cys53, Cys42–Cys80, and Cys47–Cys62.

This sequence belongs to the venom protein 11 family. 01 (wap-1) subfamily. Post-translationally, contains 5 disulfide bonds. In terms of tissue distribution, expressed by the venom gland.

It localises to the secreted. Functionally, has antibacterial activity. The sequence is that of U15-lycotoxin-Ls1d from Lycosa singoriensis (Wolf spider).